The primary structure comprises 196 residues: Probable GTP-binding protein EngB (196 aa).

Positions 24–196 constitute an EngB-type G domain; it reads ELSEVALSGR…IWNLIEPYIS (173 aa). Residues 32-39, 59-63, 77-80, 144-147, and 176-178 each bind GTP; these read GRSNVGKS, GKTQT, DVPG, TKED, and YSS. Positions 39 and 61 each coordinate Mg(2+).

It belongs to the TRAFAC class TrmE-Era-EngA-EngB-Septin-like GTPase superfamily. EngB GTPase family. It depends on Mg(2+) as a cofactor.

Functionally, necessary for normal cell division and for the maintenance of normal septation. This chain is Probable GTP-binding protein EngB, found in Staphylococcus aureus (strain Mu3 / ATCC 700698).